Consider the following 296-residue polypeptide: L-fucono-1,5-lactonase (296 aa).

Belongs to the metallo-dependent hydrolases superfamily. In terms of assembly, monomer. The cofactor is Does not require a divalent metal for activity. The purified enzyme contains Zn(2+), but the addition of chelators does not diminish the catalytic activity of the enzyme, indicating that it does not require a divalent cation for substrate turnover..

It catalyses the reaction L-fucono-1,5-lactone + H2O = L-fuconate + H(+). It carries out the reaction L-fucono-1,4-lactone + H2O = L-fuconate + H(+). The catalysed reaction is D-arabinono-1,4-lactone + H2O = D-arabinonate + H(+). The enzyme catalyses L-xylono-1,4-lactone + H2O = L-xylonate + H(+). It catalyses the reaction L-galactono-1,4-lactone + H2O = L-galactonate + H(+). Its pathway is carbohydrate degradation; L-fucose degradation. In terms of biological role, L-fucono-1,5-lactonase involved in an L-fucose degradation pathway. Catalyzes the hydrolysis of L-fucono-1,5-lactone to L-fuconate. L-fucono-1,5-lactone is the best substrate, but the enzyme can also hydrolyze L-fucono-1,4-lactone, L-galactono-1,4-lactone D-arabinono-1,4-lactone and L-xylono-1,4-lactone. The chain is L-fucono-1,5-lactonase from Burkholderia multivorans (strain ATCC 17616 / 249).